Consider the following 93-residue polypeptide: Small ribosomal subunit protein uS19 (93 aa).

The protein belongs to the universal ribosomal protein uS19 family.

Protein S19 forms a complex with S13 that binds strongly to the 16S ribosomal RNA. This is Small ribosomal subunit protein uS19 from Pediococcus pentosaceus (strain ATCC 25745 / CCUG 21536 / LMG 10740 / 183-1w).